A 575-amino-acid chain; its full sequence is Phosphoenolpyruvate-protein phosphotransferase (575 aa).

A Phosphotyrosine modification is found at Y122. H189 acts as the Tele-phosphohistidine intermediate in catalysis. Residues R296 and R332 each coordinate phosphoenolpyruvate. 2 residues coordinate Mg(2+): E431 and D455. Residues 454-455 and R465 contribute to the phosphoenolpyruvate site; that span reads ND. The active-site Proton donor is the C502.

It belongs to the PEP-utilizing enzyme family. In terms of assembly, homodimer. Interacts with the pole-localizer protein TmaR. Binding to TmaR is reversible as long as TmaR can get phosphorylated, whereas binding to non-phosphorylated TmaR is very strong and shifts the equilibrium toward binding. Requires Mg(2+) as cofactor. In terms of processing, phosphorylated on Tyr-122. Phosphorylation on Tyr-122 is important for polar localization but not for interaction with TmaR and for activity.

It localises to the cytoplasm. It carries out the reaction L-histidyl-[protein] + phosphoenolpyruvate = N(pros)-phospho-L-histidyl-[protein] + pyruvate. Inhibited by oxalate. General (non sugar-specific) component of the phosphoenolpyruvate-dependent sugar phosphotransferase system (sugar PTS). This major carbohydrate active-transport system catalyzes the phosphorylation of incoming sugar substrates concomitantly with their translocation across the cell membrane. Enzyme I transfers the phosphoryl group from phosphoenolpyruvate (PEP) to the phosphoryl carrier protein (HPr). Can also use (Z)-3-fluoro-PEP (ZFPEP), (Z)-3-methyl-PEP (ZMePEP), (Z)-3-chloro-PEP (ZClPEP) and (E)-3-chloro-PEP (EClPEP) as alternative phosphoryl donors. The polypeptide is Phosphoenolpyruvate-protein phosphotransferase (Escherichia coli (strain K12)).